Here is a 132-residue protein sequence, read N- to C-terminus: Small ribosomal subunit protein uS8 (132 aa).

It belongs to the universal ribosomal protein uS8 family. As to quaternary structure, part of the 30S ribosomal subunit. Contacts proteins S5 and S12.

In terms of biological role, one of the primary rRNA binding proteins, it binds directly to 16S rRNA central domain where it helps coordinate assembly of the platform of the 30S subunit. The protein is Small ribosomal subunit protein uS8 of Allorhizobium ampelinum (strain ATCC BAA-846 / DSM 112012 / S4) (Agrobacterium vitis (strain S4)).